Here is a 309-residue protein sequence, read N- to C-terminus: Porphobilinogen deaminase (309 aa).

Cys-244 carries the S-(dipyrrolylmethanemethyl)cysteine modification.

This sequence belongs to the HMBS family. In terms of assembly, monomer. Dipyrromethane serves as cofactor.

The enzyme catalyses 4 porphobilinogen + H2O = hydroxymethylbilane + 4 NH4(+). Its pathway is porphyrin-containing compound metabolism; protoporphyrin-IX biosynthesis; coproporphyrinogen-III from 5-aminolevulinate: step 2/4. Its function is as follows. Tetrapolymerization of the monopyrrole PBG into the hydroxymethylbilane pre-uroporphyrinogen in several discrete steps. The polypeptide is Porphobilinogen deaminase (Listeria innocua serovar 6a (strain ATCC BAA-680 / CLIP 11262)).